The sequence spans 115 residues: Parathyroid hormone (115 aa).

A signal peptide spans 1–25; the sequence is MMSAKNMVKVMIVMFAIFLLAKSDG. Residues 26 to 31 constitute a propeptide that is removed on maturation; that stretch reads KPVRKR. Residues 51–69 are important for receptor binding; the sequence is RVEWLRKKLQDVHNFIALG. The tract at residues 73-115 is disordered; it reads FHRDGGSQRPRKKEDNVLIESHQKSLGEADKADVDVLSKTKSQ.

This sequence belongs to the parathyroid hormone family. In terms of assembly, interacts with PTH1R (via N-terminal extracellular domain).

It localises to the secreted. Parathyroid hormone elevates calcium level by dissolving the salts in bone and preventing their renal excretion. Acts by binding to its receptor, PTH1R, activating G protein-coupled receptor signaling. Stimulates [1-14C]-2-deoxy-D-glucose (2DG) transport and glycogen synthesis in osteoblastic cells. The polypeptide is Parathyroid hormone (PTH) (Equus caballus (Horse)).